Consider the following 364-residue polypeptide: Aminomethyltransferase (364 aa).

This sequence belongs to the GcvT family. As to quaternary structure, the glycine cleavage system is composed of four proteins: P, T, L and H.

It catalyses the reaction N(6)-[(R)-S(8)-aminomethyldihydrolipoyl]-L-lysyl-[protein] + (6S)-5,6,7,8-tetrahydrofolate = N(6)-[(R)-dihydrolipoyl]-L-lysyl-[protein] + (6R)-5,10-methylene-5,6,7,8-tetrahydrofolate + NH4(+). Functionally, the glycine cleavage system catalyzes the degradation of glycine. The protein is Aminomethyltransferase of Salmonella dublin (strain CT_02021853).